The chain runs to 373 residues: tRNA/tmRNA (uracil-C(5))-methyltransferase (373 aa).

Positions 190, 219, 224, 240, and 300 each coordinate S-adenosyl-L-methionine. The active-site Nucleophile is the Cys-325. Glu-359 (proton acceptor) is an active-site residue.

The protein belongs to the class I-like SAM-binding methyltransferase superfamily. RNA M5U methyltransferase family. TrmA subfamily.

It catalyses the reaction uridine(54) in tRNA + S-adenosyl-L-methionine = 5-methyluridine(54) in tRNA + S-adenosyl-L-homocysteine + H(+). The enzyme catalyses uridine(341) in tmRNA + S-adenosyl-L-methionine = 5-methyluridine(341) in tmRNA + S-adenosyl-L-homocysteine + H(+). Functionally, dual-specificity methyltransferase that catalyzes the formation of 5-methyluridine at position 54 (m5U54) in all tRNAs, and that of position 341 (m5U341) in tmRNA (transfer-mRNA). The sequence is that of tRNA/tmRNA (uracil-C(5))-methyltransferase from Chromohalobacter salexigens (strain ATCC BAA-138 / DSM 3043 / CIP 106854 / NCIMB 13768 / 1H11).